The following is a 659-amino-acid chain: Putative oxidoreductase AegA (659 aa).

4Fe-4S ferredoxin-type domains lie at Arg-3–Cys-22, His-47–Asp-77, Asp-78–Thr-107, Val-114–Asp-147, and Asp-218–Leu-252. Cys-12, Cys-15, Cys-18, Cys-22, Cys-56, Cys-59, Cys-64, Cys-68, Cys-87, Cys-90, Cys-93, Cys-97, Cys-121, Cys-124, Cys-133, Cys-137, Cys-227, Cys-230, Cys-236, and Cys-240 together coordinate [4Fe-4S] cluster.

[4Fe-4S] cluster is required as a cofactor.

Functionally, involved in formate-dependent uric acid degradation under microaerobic and anaerobic conditions. May reduce the enzymes necessary for uric acid degradation. The polypeptide is Putative oxidoreductase AegA (Escherichia coli (strain K12)).